The sequence spans 120 residues: NAD(P)H-quinone oxidoreductase subunit 3 (120 aa).

3 consecutive transmembrane segments (helical) span residues 10 to 30 (FLGF…TNLI), 64 to 84 (MFAL…PWAV), and 89 to 109 (LGLL…IALA).

It belongs to the complex I subunit 3 family. In terms of assembly, NDH-1 can be composed of about 15 different subunits; different subcomplexes with different compositions have been identified which probably have different functions.

Its subcellular location is the cellular thylakoid membrane. The enzyme catalyses a plastoquinone + NADH + (n+1) H(+)(in) = a plastoquinol + NAD(+) + n H(+)(out). It catalyses the reaction a plastoquinone + NADPH + (n+1) H(+)(in) = a plastoquinol + NADP(+) + n H(+)(out). NDH-1 shuttles electrons from an unknown electron donor, via FMN and iron-sulfur (Fe-S) centers, to quinones in the respiratory and/or the photosynthetic chain. The immediate electron acceptor for the enzyme in this species is believed to be plastoquinone. Couples the redox reaction to proton translocation, and thus conserves the redox energy in a proton gradient. Cyanobacterial NDH-1 also plays a role in inorganic carbon-concentration. The polypeptide is NAD(P)H-quinone oxidoreductase subunit 3 (Prochlorococcus marinus (strain MIT 9515)).